The sequence spans 527 residues: Glucose-6-phosphate isomerase (527 aa).

The active-site Proton donor is the glutamate 347. Active-site residues include histidine 378 and lysine 493.

This sequence belongs to the GPI family.

The protein resides in the cytoplasm. The catalysed reaction is alpha-D-glucose 6-phosphate = beta-D-fructose 6-phosphate. The protein operates within carbohydrate biosynthesis; gluconeogenesis. Its pathway is carbohydrate degradation; glycolysis; D-glyceraldehyde 3-phosphate and glycerone phosphate from D-glucose: step 2/4. Functionally, catalyzes the reversible isomerization of glucose-6-phosphate to fructose-6-phosphate. This is Glucose-6-phosphate isomerase from Chlamydia caviae (strain ATCC VR-813 / DSM 19441 / 03DC25 / GPIC) (Chlamydophila caviae).